Here is a 133-residue protein sequence, read N- to C-terminus: Small ribosomal subunit protein uS8 (133 aa).

This sequence belongs to the universal ribosomal protein uS8 family. In terms of assembly, part of the 30S ribosomal subunit.

Functionally, one of the primary rRNA binding proteins, it binds directly to 16S rRNA central domain where it helps coordinate assembly of the platform of the 30S subunit. The chain is Small ribosomal subunit protein uS8 from Sulfolobus acidocaldarius (strain ATCC 33909 / DSM 639 / JCM 8929 / NBRC 15157 / NCIMB 11770).